The following is a 534-amino-acid chain: Peptide chain release factor 3 (534 aa).

A tr-type G domain is found at 9–278 (ARRRTFAIIS…FFVEHAPPPQ (270 aa)). GTP is bound by residues 18 to 25 (SHPDAGKT), 86 to 90 (DTPGH), and 140 to 143 (NKLD).

Belongs to the TRAFAC class translation factor GTPase superfamily. Classic translation factor GTPase family. PrfC subfamily.

The protein resides in the cytoplasm. Increases the formation of ribosomal termination complexes and stimulates activities of RF-1 and RF-2. It binds guanine nucleotides and has strong preference for UGA stop codons. It may interact directly with the ribosome. The stimulation of RF-1 and RF-2 is significantly reduced by GTP and GDP, but not by GMP. The polypeptide is Peptide chain release factor 3 (Xanthomonas axonopodis pv. citri (strain 306)).